A 106-amino-acid chain; its full sequence is P4 prophage-derived uncharacterized protein t2655 (106 aa).

This is P4 prophage-derived uncharacterized protein t2655 from Salmonella typhi.